We begin with the raw amino-acid sequence, 194 residues long: Adenylate kinase (194 aa).

Residue 10–15 coordinates ATP; that stretch reads GAGKGT. The NMP stretch occupies residues 30 to 59; the sequence is STGDMLRAAVAAGTPVGLKAKAVMESGGLV. AMP contacts are provided by residues Thr31, Arg36, 57–59, 85–88, and Gln92; these read GLV and GFPR. An LID region spans residues 126–142; it reads NRAAEAKAKGEPVRKDD. Arg127 serves as a coordination point for ATP. Residues Arg139 and Arg150 each contribute to the AMP site. Ala178 is a binding site for ATP.

The protein belongs to the adenylate kinase family. In terms of assembly, monomer.

The protein resides in the cytoplasm. It catalyses the reaction AMP + ATP = 2 ADP. The protein operates within purine metabolism; AMP biosynthesis via salvage pathway; AMP from ADP: step 1/1. Its function is as follows. Catalyzes the reversible transfer of the terminal phosphate group between ATP and AMP. Plays an important role in cellular energy homeostasis and in adenine nucleotide metabolism. This Azorhizobium caulinodans (strain ATCC 43989 / DSM 5975 / JCM 20966 / LMG 6465 / NBRC 14845 / NCIMB 13405 / ORS 571) protein is Adenylate kinase.